Reading from the N-terminus, the 144-residue chain is Nucleoside diphosphate kinase (144 aa).

Residues K11, F59, R87, T93, R104, and N114 each contribute to the ATP site. The active-site Pros-phosphohistidine intermediate is the H117.

Belongs to the NDK family. As to quaternary structure, homotetramer. Mg(2+) is required as a cofactor.

The protein resides in the cytoplasm. The enzyme catalyses a 2'-deoxyribonucleoside 5'-diphosphate + ATP = a 2'-deoxyribonucleoside 5'-triphosphate + ADP. The catalysed reaction is a ribonucleoside 5'-diphosphate + ATP = a ribonucleoside 5'-triphosphate + ADP. Its function is as follows. Major role in the synthesis of nucleoside triphosphates other than ATP. The ATP gamma phosphate is transferred to the NDP beta phosphate via a ping-pong mechanism, using a phosphorylated active-site intermediate. This Sorangium cellulosum (strain So ce56) (Polyangium cellulosum (strain So ce56)) protein is Nucleoside diphosphate kinase.